Here is a 538-residue protein sequence, read N- to C-terminus: indole-2-monooxygenase (538 aa).

A helical membrane pass occupies residues 22 to 42 (ALLLAIPFSLLLLPLLLRYLA). Cys481 lines the heme pocket.

It belongs to the cytochrome P450 family. It depends on heme as a cofactor.

It is found in the membrane. It carries out the reaction indole + reduced [NADPH--hemoprotein reductase] + O2 = indolin-2-one + oxidized [NADPH--hemoprotein reductase] + H2O + H(+). The protein operates within secondary metabolite biosynthesis; 2,4-dihydroxy-1,4-benzoxazin-3-one biosynthesis; 2,4-dihydroxy-1,4-benzoxazin-3-one from indoleglycerol phosphate: step 2/5. Its function is as follows. Catalyzes the conversion of indole to indolin-2-one. In Zea mays (Maize), this protein is indole-2-monooxygenase (CYP71C4).